The primary structure comprises 232 residues: MKIGIIGAINQETERLKKIIHFYIEKKINTYKIYIGKFKSHDVFLIKSGIGKVSASIATMILIDLYKPDTIINSGSAGSLQSFLKIGDIIIPKKTCYYDVDLTNFGYTRGQIPGYPKEFTVNEKICNFFKKNADKYQLKYIKGLILSGDTFVRENESIKILKKQFPSAIAVEMESSAIAQVCYKFNIPLIIIKSISDASDNNATVNFKENIDIVSYQLSKFVKIILENLIDM.

Catalysis depends on Glu12, which acts as the Proton acceptor. Residues Gly78, Val152, and 173–174 (ME) contribute to the substrate site. Asp197 functions as the Proton donor in the catalytic mechanism.

This sequence belongs to the PNP/UDP phosphorylase family. MtnN subfamily. As to quaternary structure, homodimer.

It catalyses the reaction S-adenosyl-L-homocysteine + H2O = S-(5-deoxy-D-ribos-5-yl)-L-homocysteine + adenine. The catalysed reaction is S-methyl-5'-thioadenosine + H2O = 5-(methylsulfanyl)-D-ribose + adenine. The enzyme catalyses 5'-deoxyadenosine + H2O = 5-deoxy-D-ribose + adenine. Its pathway is amino-acid biosynthesis; L-methionine biosynthesis via salvage pathway; S-methyl-5-thio-alpha-D-ribose 1-phosphate from S-methyl-5'-thioadenosine (hydrolase route): step 1/2. Its function is as follows. Catalyzes the irreversible cleavage of the glycosidic bond in both 5'-methylthioadenosine (MTA) and S-adenosylhomocysteine (SAH/AdoHcy) to adenine and the corresponding thioribose, 5'-methylthioribose and S-ribosylhomocysteine, respectively. Also cleaves 5'-deoxyadenosine, a toxic by-product of radical S-adenosylmethionine (SAM) enzymes, into 5-deoxyribose and adenine. Thus, is required for in vivo function of the radical SAM enzymes biotin synthase and lipoic acid synthase, that are inhibited by 5'-deoxyadenosine accumulation. This Buchnera aphidicola subsp. Acyrthosiphon pisum (strain 5A) protein is 5'-methylthioadenosine/S-adenosylhomocysteine nucleosidase.